The primary structure comprises 488 residues: Ribulose bisphosphate carboxylase large chain (488 aa).

Residues Asn-127 and Thr-177 each coordinate substrate. Catalysis depends on Lys-179, which acts as the Proton acceptor. A substrate-binding site is contributed by Lys-181. Lys-205, Asp-207, and Glu-208 together coordinate Mg(2+). Residue Lys-205 is modified to N6-carboxylysine. Catalysis depends on His-297, which acts as the Proton acceptor. Arg-298, His-330, and Ser-382 together coordinate substrate.

It belongs to the RuBisCO large chain family. Type I subfamily. In terms of assembly, heterohexadecamer of 8 large chains and 8 small chains. Mg(2+) is required as a cofactor.

It is found in the plastid. It localises to the chloroplast. The catalysed reaction is 2 (2R)-3-phosphoglycerate + 2 H(+) = D-ribulose 1,5-bisphosphate + CO2 + H2O. It catalyses the reaction D-ribulose 1,5-bisphosphate + O2 = 2-phosphoglycolate + (2R)-3-phosphoglycerate + 2 H(+). RuBisCO catalyzes two reactions: the carboxylation of D-ribulose 1,5-bisphosphate, the primary event in carbon dioxide fixation, as well as the oxidative fragmentation of the pentose substrate in the photorespiration process. Both reactions occur simultaneously and in competition at the same active site. The sequence is that of Ribulose bisphosphate carboxylase large chain from Rhodomonas salina (Cryptomonas salina).